Here is a 61-residue protein sequence, read N- to C-terminus: Small ribosomal subunit protein uS14 (61 aa).

Cys-24, Cys-27, Cys-40, and Cys-43 together coordinate Zn(2+).

It belongs to the universal ribosomal protein uS14 family. Zinc-binding uS14 subfamily. Part of the 30S ribosomal subunit. Contacts proteins S3 and S10. Requires Zn(2+) as cofactor.

Functionally, binds 16S rRNA, required for the assembly of 30S particles and may also be responsible for determining the conformation of the 16S rRNA at the A site. This Clostridium botulinum (strain ATCC 19397 / Type A) protein is Small ribosomal subunit protein uS14.